The sequence spans 239 residues: Probable transcriptional regulatory protein lmo0369 (239 aa).

This sequence belongs to the TACO1 family. YeeN subfamily.

It is found in the cytoplasm. The protein is Probable transcriptional regulatory protein lmo0369 of Listeria monocytogenes serovar 1/2a (strain ATCC BAA-679 / EGD-e).